The primary structure comprises 84 residues: Cytochrome b559 subunit alpha (84 aa).

The helical transmembrane segment at 24 to 38 threads the bilayer; that stretch reads IIHAVTLPAIFIAGF. Histidine 26 is a binding site for heme.

It belongs to the PsbE/PsbF family. As to quaternary structure, heterodimer of an alpha subunit and a beta subunit. PSII is composed of 1 copy each of membrane proteins PsbA, PsbB, PsbC, PsbD, PsbE, PsbF, PsbH, PsbI, PsbJ, PsbK, PsbL, PsbM, PsbT, PsbX, PsbY, Psb30/Ycf12, peripheral proteins PsbO, CyanoQ (PsbQ), PsbU, PsbV and a large number of cofactors. It forms dimeric complexes. It depends on heme b as a cofactor.

Its subcellular location is the cellular thylakoid membrane. Its function is as follows. This b-type cytochrome is tightly associated with the reaction center of photosystem II (PSII). PSII is a light-driven water:plastoquinone oxidoreductase that uses light energy to abstract electrons from H(2)O, generating O(2) and a proton gradient subsequently used for ATP formation. It consists of a core antenna complex that captures photons, and an electron transfer chain that converts photonic excitation into a charge separation. In Prochlorococcus marinus (strain MIT 9301), this protein is Cytochrome b559 subunit alpha.